A 254-amino-acid polypeptide reads, in one-letter code: Type III pantothenate kinase 2 (254 aa).

Position 6-13 (6-13) interacts with ATP; that stretch reads DMGNSHIH. Position 107–110 (107–110) interacts with substrate; the sequence is GADR. The active-site Proton acceptor is the Asp-109. Residue Asp-130 participates in K(+) binding. Thr-133 serves as a coordination point for ATP. Thr-185 lines the substrate pocket.

It belongs to the type III pantothenate kinase family. As to quaternary structure, homodimer. NH4(+) is required as a cofactor. K(+) serves as cofactor.

Its subcellular location is the cytoplasm. The enzyme catalyses (R)-pantothenate + ATP = (R)-4'-phosphopantothenate + ADP + H(+). The protein operates within cofactor biosynthesis; coenzyme A biosynthesis; CoA from (R)-pantothenate: step 1/5. Catalyzes the phosphorylation of pantothenate (Pan), the first step in CoA biosynthesis. In Francisella tularensis subsp. holarctica (strain LVS), this protein is Type III pantothenate kinase 2.